The chain runs to 1368 residues: Inactive tyrosine-protein kinase PRAG1 (1368 aa).

Residues 200–236 (CLKGPRPCTSPQPLRESLPSEDDSDQRCSPSGDSEGG) form a disordered region. The residue at position 238 (tyrosine 238) is a Phosphotyrosine; by CSK. The interval 297–330 (STANPPHLGPKKPSLNSEAASSSDGLSCGSSRSG) is disordered. The segment covering 317–330 (SSSDGLSCGSSRSG) has biased composition (low complexity). Phosphotyrosine; by CSK occurs at positions 343 and 391. 3 disordered regions span residues 392–443 (AESA…PNAA), 499–605 (LSSR…GAWS), and 636–792 (HSNS…KKIV). Residues 414–434 (VSSGQVWTGDTWSQKTPSGWS) are compositionally biased toward polar residues. A compositionally biased stretch (basic and acidic residues) spans 502 to 518 (RESHPHNMTENSSKEKP). Low complexity-rich tracts occupy residues 522-535 (PKLSKSSPGGSPVS) and 550-563 (SGSSVGSQPSSRVP). Composition is skewed to polar residues over residues 564–574 (TNLTSSCQTNG) and 652–666 (SGQNGKTNSGMSKSA). 2 positions are modified to phosphoserine: serine 667 and serine 716. Polar residues-rich tracts occupy residues 707–717 (VSQSSAESLSP) and 725–741 (SFTTGSTDSLASDSRTC). Residues serine 753 and serine 797 each carry the phosphoserine modification. Disordered stretches follow at residues 799–818 (PDGFFWTQGSPKPRTASPKL) and 873–901 (NSKGGCGSPNLQGRAATSTSSSQLSVSSQ). The segment covering 887–901 (AATSTSSSQLSVSSQ) has biased composition (low complexity). Positions 906-949 (SSQLQLHSLLSSISSKEGTYAKLGGLYTQSLARLVTKCEDLFMG) are required for homodimerization. The Protein kinase domain maps to 940–1291 (VTKCEDLFMG…EAKRVLQCLL (352 aa)). Residues 1134–1144 (SSPGPSANPSV) show a composition bias toward polar residues. The interval 1134 to 1166 (SSPGPSANPSVPTTTSRCPSAAPAATTACQGGP) is disordered. Low complexity predominate over residues 1145 to 1162 (PTTTSRCPSAAPAATTAC). Positions 1293 to 1368 (GPRRELVEQP…LQSLKLLQLL (76 aa)) are required for homodimerization.

The protein belongs to the protein kinase superfamily. In terms of assembly, homodimer. Dimerization leads to the catalytic activation of CSK. Interacts (via C-terminus) with RND2. Interacts with CSK (via SH2 domain) in a Tyr-391 phosphorylation-dependent manner; this interaction potentiates kinase activity of CSK. Interacts with NOTCH1 intracellular domain (N1ICD). Forms a complex with N1ICD and MAML1, in a MAML1-dependent manner. Post-translationally, phosphorylated by CSK on Tyr-238, Tyr-343, and Tyr-391; Tyr-391 is a primary site of phosphorylation. In terms of tissue distribution, highly-expressed in brain, including cortical and hippocampal pyramidal neurons, as well as in kidney, spleen, colon and small intestine.

The protein resides in the cytoplasm. It is found in the nucleus. Its subcellular location is the cell junction. The protein localises to the focal adhesion. Catalytically inactive protein kinase that acts as a scaffold protein. Functions as an effector of the small GTPase RND2, which stimulates RhoA activity and inhibits NGF-induced neurite outgrowth. Promotes Src family kinase (SFK) signallig by regulating the subcellular localization of CSK, a negative regulator of these kinases, leading to the regulation of cell morphology and motility by a CSK-dependent mechanism. Acts as a critical coactivator of Notch signaling. This Rattus norvegicus (Rat) protein is Inactive tyrosine-protein kinase PRAG1.